A 160-amino-acid polypeptide reads, in one-letter code: uncharacterized protein (160 aa).

Residues 2-140 (MIIIPNNEIA…KARRLKPEIP (139 aa)) form the N-acetyltransferase domain.

This is an uncharacterized protein from Bacillus subtilis (strain 168).